Reading from the N-terminus, the 236-residue chain is 2,3,4,5-tetrahydropyridine-2,6-dicarboxylate N-acetyltransferase (236 aa).

It belongs to the transferase hexapeptide repeat family. DapH subfamily.

It catalyses the reaction (S)-2,3,4,5-tetrahydrodipicolinate + acetyl-CoA + H2O = L-2-acetamido-6-oxoheptanedioate + CoA. Its pathway is amino-acid biosynthesis; L-lysine biosynthesis via DAP pathway; LL-2,6-diaminopimelate from (S)-tetrahydrodipicolinate (acetylase route): step 1/3. In terms of biological role, catalyzes the transfer of an acetyl group from acetyl-CoA to tetrahydrodipicolinate. The sequence is that of 2,3,4,5-tetrahydropyridine-2,6-dicarboxylate N-acetyltransferase from Geobacillus kaustophilus (strain HTA426).